The chain runs to 318 residues: Transaldolase (318 aa).

The active-site Schiff-base intermediate with substrate is the Lys126.

The protein belongs to the transaldolase family. Type 1 subfamily. As to quaternary structure, homodimer.

The protein localises to the cytoplasm. The enzyme catalyses D-sedoheptulose 7-phosphate + D-glyceraldehyde 3-phosphate = D-erythrose 4-phosphate + beta-D-fructose 6-phosphate. The protein operates within carbohydrate degradation; pentose phosphate pathway; D-glyceraldehyde 3-phosphate and beta-D-fructose 6-phosphate from D-ribose 5-phosphate and D-xylulose 5-phosphate (non-oxidative stage): step 2/3. In terms of biological role, transaldolase is important for the balance of metabolites in the pentose-phosphate pathway. This Cupriavidus metallidurans (strain ATCC 43123 / DSM 2839 / NBRC 102507 / CH34) (Ralstonia metallidurans) protein is Transaldolase.